The chain runs to 305 residues: Fatty acid elongase 1 (305 aa).

The next 7 membrane-spanning stretches (helical) occupy residues 24 to 44, 80 to 100, 129 to 149, 158 to 178, 183 to 203, 217 to 237, and 257 to 277; these read MIANVDVVLYISFLYLGFVFI, VVWNLALSIFSIFGTSTVTPV, FWMGIFALSKIPELVDTIFLV, FLHWYHHVTVLLFSWHTYCVG, IWVAAMNYSVHSVMYLYFALA, YITIIQILQMVVGCYVTIFAL, and IQLVMYASYLYLFSKMFVASY. The HxxHH motif signature appears at 160 to 164; sequence HWYHH. His-163 functions as the Nucleophile in the catalytic mechanism. Positions 284–305 are disordered; the sequence is PTVGGPSSTAGVSNGSVEKKVK. The span at 288–299 shows a compositional bias: polar residues; the sequence is GPSSTAGVSNGS. Asn-297 carries an N-linked (GlcNAc...) asparagine glycan.

Belongs to the ELO family.

It is found in the endoplasmic reticulum membrane. The enzyme catalyses an acyl-CoA + malonyl-CoA + H(+) = a 3-oxoacyl-CoA + CO2 + CoA. The protein operates within lipid metabolism; fatty acid biosynthesis. Its function is as follows. Involved in the synthesis of fatty acids. Elongates C4 fatty acids to C10. The polypeptide is Fatty acid elongase 1 (Trypanosoma brucei brucei (strain 927/4 GUTat10.1)).